The primary structure comprises 88 residues: YcgL domain-containing protein HI_1446 (88 aa).

Residues 1–85 (MLCAIYKSKK…QDDGLFNSLS (85 aa)) enclose the YcgL domain.

This Haemophilus influenzae (strain ATCC 51907 / DSM 11121 / KW20 / Rd) protein is YcgL domain-containing protein HI_1446.